A 238-amino-acid chain; its full sequence is ATP synthase subunit a (238 aa).

5 helical membrane-spanning segments follow: residues 18–38 (LTIL…VFWA), 75–95 (YSLL…LGLM), 112–132 (NFGV…IEGI), 179–199 (VVTG…PLAF), and 203–223 (IVWT…FIIL).

It belongs to the ATPase A chain family. As to quaternary structure, F-type ATPases have 2 components, CF(1) - the catalytic core - and CF(0) - the membrane proton channel. CF(1) has five subunits: alpha(3), beta(3), gamma(1), delta(1), epsilon(1). CF(0) has three main subunits: a(1), b(2) and c(9-12). The alpha and beta chains form an alternating ring which encloses part of the gamma chain. CF(1) is attached to CF(0) by a central stalk formed by the gamma and epsilon chains, while a peripheral stalk is formed by the delta and b chains.

It localises to the cell membrane. Its function is as follows. Key component of the proton channel; it plays a direct role in the translocation of protons across the membrane. The chain is ATP synthase subunit a from Streptococcus agalactiae serotype Ia (strain ATCC 27591 / A909 / CDC SS700).